Consider the following 537-residue polypeptide: Nedd4 binding protein 3 (537 aa).

Ser-172 carries the phosphoserine modification. Disordered regions lie at residues 173–234 (LDEG…VLSC), 327–359 (RKELRAQQGLAPEPRTSGPPMEADPNARPEEEA), and 422–456 (LQEQAPREEAPGSCETDDCKSRGLLGEAGGNEARE). The segment covering 178–207 (PEPSLSDSSSGGSFGRSPGTGPSPFSSSLG) has biased composition (low complexity). Positions 295-523 (VDRLHEVAQK…LEQELRVLRE (229 aa)) form a coiled coil.

Belongs to the N4BP3 family. Binds NEDD4. Interacts with 14-3-3 proteins. Interacts with MAVS.

It is found in the cytoplasmic vesicle. The protein resides in the cell projection. It localises to the axon. The protein localises to the dendrite. Plays a positive role in the antiviral innate immune signaling pathway. Mechanistically, interacts with MAVS and functions as a positive regulator to promote 'Lys-63'-linked polyubiquitination of MAVS and thus strengthens the interaction between MAVS and TRAF2. Also plays a role in axon and dendrite arborization during cranial nerve development. May also be important for neural crest migration and early development of other anterior structures including eye, brain and cranial cartilage. This Rattus norvegicus (Rat) protein is Nedd4 binding protein 3.